The chain runs to 278 residues: Sulfur carrier protein FdhD (278 aa).

The Cysteine persulfide intermediate role is filled by cysteine 121. Residue 260–265 participates in Mo-bis(molybdopterin guanine dinucleotide) binding; it reads FCKPGR.

It belongs to the FdhD family.

The protein resides in the cytoplasm. In terms of biological role, required for formate dehydrogenase (FDH) activity. Acts as a sulfur carrier protein that transfers sulfur from IscS to the molybdenum cofactor prior to its insertion into FDH. This Salmonella newport (strain SL254) protein is Sulfur carrier protein FdhD.